The primary structure comprises 240 residues: Pyridoxine 5'-phosphate synthase (240 aa).

Position 7 (asparagine 7) interacts with 3-amino-2-oxopropyl phosphate. 9–10 (DH) is a binding site for 1-deoxy-D-xylulose 5-phosphate. Arginine 18 lines the 3-amino-2-oxopropyl phosphate pocket. Histidine 43 functions as the Proton acceptor in the catalytic mechanism. Residues arginine 45 and histidine 50 each contribute to the 1-deoxy-D-xylulose 5-phosphate site. Glutamate 70 (proton acceptor) is an active-site residue. A 1-deoxy-D-xylulose 5-phosphate-binding site is contributed by threonine 100. Histidine 191 serves as the catalytic Proton donor. 3-amino-2-oxopropyl phosphate is bound by residues glycine 192 and 213–214 (GH).

It belongs to the PNP synthase family. In terms of assembly, homooctamer; tetramer of dimers.

The protein localises to the cytoplasm. It carries out the reaction 3-amino-2-oxopropyl phosphate + 1-deoxy-D-xylulose 5-phosphate = pyridoxine 5'-phosphate + phosphate + 2 H2O + H(+). The protein operates within cofactor biosynthesis; pyridoxine 5'-phosphate biosynthesis; pyridoxine 5'-phosphate from D-erythrose 4-phosphate: step 5/5. Catalyzes the complicated ring closure reaction between the two acyclic compounds 1-deoxy-D-xylulose-5-phosphate (DXP) and 3-amino-2-oxopropyl phosphate (1-amino-acetone-3-phosphate or AAP) to form pyridoxine 5'-phosphate (PNP) and inorganic phosphate. The polypeptide is Pyridoxine 5'-phosphate synthase (Microcystis aeruginosa (strain NIES-843 / IAM M-2473)).